Consider the following 348-residue polypeptide: MTKKDIRILAFESSCDETSTAVIKNGREIESLIVATQIKSHQRFGGVVPEVASRHHIEVITQITKEALAEANATWDDIDAIAVTYGPGLVGALLIGVSAAKAASMATGIPLIGVDHIMGHIMAAQLKDEIEYPALALQVSGGHTEIVLMKDPIHFEIVGDTRDDAAGEAYDKIGRVLGVNYPAGKTIDEWAHKGKDTFHFPRAMMEDDDYDFSLSGLKSAFINTCHHADQIHEKLDKYDLAASFQASVVDVLSHKTIRAIKEYKPKTFILGGGVAANHGLRDRLAEEIEKLPADIKPKVILPDLKLCGDNAAMIGAAAYNLYKAGKFSDENLNADPSLELPYADSMLK.

Fe cation-binding residues include H116 and H120. Residues 138 to 142 (QVSGG), D171, G184, D188, and N277 contribute to the substrate site. Position 309 (D309) interacts with Fe cation.

Belongs to the KAE1 / TsaD family. The cofactor is Fe(2+).

Its subcellular location is the cytoplasm. It carries out the reaction L-threonylcarbamoyladenylate + adenosine(37) in tRNA = N(6)-L-threonylcarbamoyladenosine(37) in tRNA + AMP + H(+). Its function is as follows. Required for the formation of a threonylcarbamoyl group on adenosine at position 37 (t(6)A37) in tRNAs that read codons beginning with adenine. Is involved in the transfer of the threonylcarbamoyl moiety of threonylcarbamoyl-AMP (TC-AMP) to the N6 group of A37, together with TsaE and TsaB. TsaD likely plays a direct catalytic role in this reaction. In Lactobacillus gasseri (strain ATCC 33323 / DSM 20243 / BCRC 14619 / CIP 102991 / JCM 1131 / KCTC 3163 / NCIMB 11718 / NCTC 13722 / AM63), this protein is tRNA N6-adenosine threonylcarbamoyltransferase.